The primary structure comprises 232 residues: 5'-methylthioadenosine/S-adenosylhomocysteine nucleosidase (232 aa).

Catalysis depends on Glu-12, which acts as the Proton acceptor. Residues Gly-78, Ile-152, and 173–174 (ME) contribute to the substrate site. Asp-197 acts as the Proton donor in catalysis.

The protein belongs to the PNP/UDP phosphorylase family. MtnN subfamily. In terms of assembly, homodimer.

The catalysed reaction is S-adenosyl-L-homocysteine + H2O = S-(5-deoxy-D-ribos-5-yl)-L-homocysteine + adenine. It carries out the reaction S-methyl-5'-thioadenosine + H2O = 5-(methylsulfanyl)-D-ribose + adenine. It catalyses the reaction 5'-deoxyadenosine + H2O = 5-deoxy-D-ribose + adenine. It functions in the pathway amino-acid biosynthesis; L-methionine biosynthesis via salvage pathway; S-methyl-5-thio-alpha-D-ribose 1-phosphate from S-methyl-5'-thioadenosine (hydrolase route): step 1/2. In terms of biological role, catalyzes the irreversible cleavage of the glycosidic bond in both 5'-methylthioadenosine (MTA) and S-adenosylhomocysteine (SAH/AdoHcy) to adenine and the corresponding thioribose, 5'-methylthioribose and S-ribosylhomocysteine, respectively. Also cleaves 5'-deoxyadenosine, a toxic by-product of radical S-adenosylmethionine (SAM) enzymes, into 5-deoxyribose and adenine. Thus, is required for in vivo function of the radical SAM enzymes biotin synthase and lipoic acid synthase, that are inhibited by 5'-deoxyadenosine accumulation. The protein is 5'-methylthioadenosine/S-adenosylhomocysteine nucleosidase of Salmonella enteritidis PT4 (strain P125109).